We begin with the raw amino-acid sequence, 912 residues long: Cadherin-2 (912 aa).

The signal sequence occupies residues 1-28 (MCRIAGTPPRILPPLALMLLAALQQAPI). Positions 29–164 (KATCEDMLCK…DSSHLKRQKR (136 aa)) are excised as a propeptide. Cadherin domains follow at residues 165–272 (DWVI…RPEF), 273–387 (LHQV…PPEF), 388–502 (TAMT…SPYF), 503–609 (VPNP…DNAP), and 610–720 (QVNP…DVDR). Over 165–729 (DWVIPPINLP…RIVGAGLGTG (565 aa)) the chain is Extracellular. Ca(2+)-binding residues include Glu-175, Asp-231, Glu-233, Asp-264, Met-265, Asn-266, Asp-267, and Asn-268. Residue Asn-278 is glycosylated (N-linked (GlcNAc...) asparagine). Positions 298, 300, and 306 each coordinate Ca(2+). Residue Asn-330 is glycosylated (N-linked (GlcNAc...) asparagine). Asp-358 provides a ligand contact to Ca(2+). N-linked (GlcNAc...) asparagine glycans are attached at residues Asn-407, Asn-578, Asn-628, and Asn-657. Residues 730 to 752 (AIIAILLCIIILLILVLMFVVWM) form a helical membrane-spanning segment. The Cytoplasmic segment spans residues 753 to 912 (KRRDKERQAK…LADMYGGGDD (160 aa)). Residues 869 to 886 (SGSTAGSLSSLNSSSSGG) are compositionally biased toward low complexity. The segment at 869-890 (SGSTAGSLSSLNSSSSGGEQDY) is disordered.

Homodimer (via extracellular region). Can also form heterodimers with other cadherins (via extracellular region). Dimerization occurs in trans, i.e. with a cadherin chain from another cell. Interacts with CTNNA2. In terms of tissue distribution, expressed at intercalated disks in the heart (at protein level).

The protein resides in the cell membrane. The protein localises to the sarcolemma. Its subcellular location is the cell junction. It localises to the cell surface. It is found in the desmosome. The protein resides in the adherens junction. Calcium-dependent cell adhesion protein; preferentially mediates homotypic cell-cell adhesion. Cadherins may thus contribute to the sorting of heterogeneous cell types, and thereby play an important role during embryonic development. Required for proper neurite branching, and pre- and postsynaptic organization. The polypeptide is Cadherin-2 (CDH2) (Gallus gallus (Chicken)).